The following is a 373-amino-acid chain: Melanoma-associated antigen C2 (373 aa).

Residues 1–102 (MPPVPGVPFR…QGPSQSPLSS (102 aa)) are disordered. Low complexity predominate over residues 40 to 60 (SSASSTLYLVFSPSSFSTSSS). Positions 85–94 (SSPPQGPPQG) are enriched in pro residues. An interaction with TRIM28 region spans residues 135–373 (SSFTYTLDEK…VMSSNVSFSE (239 aa)). Residues 141–336 (LDEKVAELVE…SSFPSWYKDA (196 aa)) form the MAGE domain.

As to quaternary structure, interacts with TRIM28 and UBE2H. Not expressed in normal tissues, except in germ cells in the seminiferous tubules and in Purkinje cells of the cerebellum. Expressed in various tumors, including melanoma, lymphoma, as well as pancreatic cancer, mammary gland cancer, non-small cell lung cancer and liver cancer. In hepatocellular carcinoma, there is an inverse correlation between tumor differentiation and protein expression, i.e. the lower the differentiation, the higher percentage of expression.

Its subcellular location is the cytoplasm. It localises to the nucleus. Functionally, proposed to enhance ubiquitin ligase activity of RING-type zinc finger-containing E3 ubiquitin-protein ligases. In vitro enhances ubiquitin ligase activity of TRIM28 and stimulates p53/TP53 ubiquitination in presence of Ubl-conjugating enzyme UBE2H leading to p53/TP53 degradation. Proposed to act through recruitment and/or stabilization of the Ubl-conjugating enzymes (E2) at the E3:substrate complex. This chain is Melanoma-associated antigen C2 (MAGEC2), found in Homo sapiens (Human).